We begin with the raw amino-acid sequence, 268 residues long: N-formylmaleamate deformylase (268 aa).

The region spanning 28–251 (ALILVPGITS…NAGHMIPWDD (224 aa)) is the AB hydrolase-1 domain. Catalysis depends on charge relay system residues Ser-101, Glu-221, and His-245.

It catalyses the reaction N-formylmaleamate + H2O = maleamate + formate + H(+). Its pathway is cofactor degradation; nicotinate degradation. Its function is as follows. Deformylase that catalyzes the conversion of N-formylmaleamic acid to maleamate in the aerobic nicotinate degradation pathway. This chain is N-formylmaleamate deformylase (nicD), found in Pseudomonas putida (strain ATCC 47054 / DSM 6125 / CFBP 8728 / NCIMB 11950 / KT2440).